The primary structure comprises 139 residues: Protein Turandot B (139 aa).

The N-terminal stretch at 1–21 (MNFKTALICFALLLIGTLCSA) is a signal peptide.

Belongs to the Turandot family.

The protein localises to the secreted. Functionally, a humoral factor that may play a role in stress tolerance. The protein is Protein Turandot B of Drosophila sechellia (Fruit fly).